A 971-amino-acid polypeptide reads, in one-letter code: Exportin-2 (971 aa).

The 74-residue stretch at 29 to 102 (AEKFLESVEG…KANIVNLMLS (74 aa)) folds into the Importin N-terminal domain.

It belongs to the XPO2/CSE1 family. Interacts with cftr.

It is found in the cytoplasm. The protein localises to the nucleus. Its function is as follows. Export receptor for importin alpha. Mediates importin-alpha re-export from the nucleus to the cytoplasm after import substrates have been released into the nucleoplasm. Negatively regulates fluid secretion and plays a role in fluid homeostasis by down-regulating cftr activity. This Oreochromis niloticus (Nile tilapia) protein is Exportin-2 (cse1l).